Consider the following 472-residue polypeptide: Na(+)/H(+) antiporter NhaA (472 aa).

11 helical membrane passes run 48–68 (AGGI…NSAW), 91–111 (MSLH…VVGL), 129–149 (ALPV…YFAV), 157–177 (AGWG…LVLL), 185–205 (LIIF…LVIA), 210–230 (HEIS…LLLL), 237–257 (HAIP…HSGV), 337–357 (GPWV…GIDF), 374–394 (VCLG…WIAV), 410–430 (LLGV…ISQL), and 443–463 (LGIL…LYFG).

This sequence belongs to the NhaA Na(+)/H(+) (TC 2.A.33) antiporter family.

It localises to the cell inner membrane. It carries out the reaction Na(+)(in) + 2 H(+)(out) = Na(+)(out) + 2 H(+)(in). Na(+)/H(+) antiporter that extrudes sodium in exchange for external protons. The polypeptide is Na(+)/H(+) antiporter NhaA (Syntrophobacter fumaroxidans (strain DSM 10017 / MPOB)).